Here is a 243-residue protein sequence, read N- to C-terminus: Phosphatidylserine decarboxylase proenzyme (243 aa).

The Schiff-base intermediate with substrate; via pyruvic acid role is filled by Ser-212. Residue Ser-212 is modified to Pyruvic acid (Ser); by autocatalysis.

This sequence belongs to the phosphatidylserine decarboxylase family. PSD-A subfamily. As to quaternary structure, heterodimer of a large membrane-associated beta subunit and a small pyruvoyl-containing alpha subunit. Pyruvate is required as a cofactor. Is synthesized initially as an inactive proenzyme. Formation of the active enzyme involves a self-maturation process in which the active site pyruvoyl group is generated from an internal serine residue via an autocatalytic post-translational modification. Two non-identical subunits are generated from the proenzyme in this reaction, and the pyruvate is formed at the N-terminus of the alpha chain, which is derived from the carboxyl end of the proenzyme. The post-translation cleavage follows an unusual pathway, termed non-hydrolytic serinolysis, in which the side chain hydroxyl group of the serine supplies its oxygen atom to form the C-terminus of the beta chain, while the remainder of the serine residue undergoes an oxidative deamination to produce ammonia and the pyruvoyl prosthetic group on the alpha chain.

It localises to the cell membrane. It catalyses the reaction a 1,2-diacyl-sn-glycero-3-phospho-L-serine + H(+) = a 1,2-diacyl-sn-glycero-3-phosphoethanolamine + CO2. Its pathway is phospholipid metabolism; phosphatidylethanolamine biosynthesis; phosphatidylethanolamine from CDP-diacylglycerol: step 2/2. Catalyzes the formation of phosphatidylethanolamine (PtdEtn) from phosphatidylserine (PtdSer). This is Phosphatidylserine decarboxylase proenzyme from Mycobacterium leprae (strain Br4923).